Here is a 420-residue protein sequence, read N- to C-terminus: Serine hydroxymethyltransferase (420 aa).

(6S)-5,6,7,8-tetrahydrofolate contacts are provided by residues Leu121 and 125-127 (GHL). Lys229 carries the post-translational modification N6-(pyridoxal phosphate)lysine.

Belongs to the SHMT family. As to quaternary structure, homodimer. It depends on pyridoxal 5'-phosphate as a cofactor.

The protein resides in the cytoplasm. The catalysed reaction is (6R)-5,10-methylene-5,6,7,8-tetrahydrofolate + glycine + H2O = (6S)-5,6,7,8-tetrahydrofolate + L-serine. Its pathway is one-carbon metabolism; tetrahydrofolate interconversion. The protein operates within amino-acid biosynthesis; glycine biosynthesis; glycine from L-serine: step 1/1. Catalyzes the reversible interconversion of serine and glycine with tetrahydrofolate (THF) serving as the one-carbon carrier. This reaction serves as the major source of one-carbon groups required for the biosynthesis of purines, thymidylate, methionine, and other important biomolecules. Also exhibits THF-independent aldolase activity toward beta-hydroxyamino acids, producing glycine and aldehydes, via a retro-aldol mechanism. The sequence is that of Serine hydroxymethyltransferase from Glaesserella parasuis serovar 5 (strain SH0165) (Haemophilus parasuis).